Here is a 162-residue protein sequence, read N- to C-terminus: Phosphopantetheine adenylyltransferase (162 aa).

Residue Ser11 coordinates substrate. ATP-binding positions include 11–12 (SF) and His19. Residues Lys43, Leu75, and Arg89 each contribute to the substrate site. Residues 90–92 (GLR), Glu100, and 125–131 (FSYISSS) contribute to the ATP site.

The protein belongs to the bacterial CoaD family. Homohexamer. It depends on Mg(2+) as a cofactor.

Its subcellular location is the cytoplasm. The enzyme catalyses (R)-4'-phosphopantetheine + ATP + H(+) = 3'-dephospho-CoA + diphosphate. It participates in cofactor biosynthesis; coenzyme A biosynthesis; CoA from (R)-pantothenate: step 4/5. Reversibly transfers an adenylyl group from ATP to 4'-phosphopantetheine, yielding dephospho-CoA (dPCoA) and pyrophosphate. This chain is Phosphopantetheine adenylyltransferase, found in Petrotoga mobilis (strain DSM 10674 / SJ95).